Reading from the N-terminus, the 333-residue chain is Coiled-coil domain-containing protein 68 (333 aa).

2 coiled-coil regions span residues 86–120 (LDLLMENMRRKDQQLLEMNRENEVLQIKLEASREA) and 160–302 (EKEQ…HWTE).

Interacts with CEP170.

The protein localises to the cytoplasm. Its subcellular location is the cytoskeleton. It localises to the microtubule organizing center. The protein resides in the centrosome. It is found in the centriole. Its function is as follows. Centriolar protein required for centriole subdistal appendage assembly and microtubule anchoring in interphase cells. Together with CCDC120, cooperate with subdistal appendage components ODF2, NIN and CEP170 for hierarchical subdistal appendage assembly. This Mus musculus (Mouse) protein is Coiled-coil domain-containing protein 68 (Ccdc68).